The following is a 373-amino-acid chain: Securin (373 aa).

Basic and acidic residues predominate over residues 1–10 (MMPANEDKEN). The tract at residues 1–27 (MMPANEDKENNIVYTGNESSGINFPQT) is disordered. Over residues 12–26 (IVYTGNESSGINFPQ) the composition is skewed to polar residues. Positions 85–88 (RLPL) match the D-box motif. Residues 177–278 (ADSGKNEESS…LPYVPEGYSP (102 aa)) form a disordered region. 4 positions are modified to phosphoserine: Ser-185, Ser-186, Ser-212, and Ser-213. Positions 185–194 (SSDDDEGNED) are enriched in acidic residues. Residues 225-235 (LFNEQGGLQQL) are compositionally biased toward low complexity. Positions 240–256 (TKNEQKTKNDKSDKTDD) are enriched in basic and acidic residues. The residue at position 277 (Ser-277) is a Phosphoserine. Ser-292 is subject to Phosphoserine; by CDC28.

It belongs to the securin family. As to quaternary structure, interacts with the caspase-like ESP1, and prevents its protease activity probably by covering its active site. Interacts with CDC20. In terms of processing, phosphorylated by CDC28. The phosphorylation may be important for ESP1 localization to the nucleus. Ubiquitinated by the anaphase promoting complex (APC) at the onset of anaphase, conducting to its degradation.

The protein resides in the cytoplasm. The protein localises to the nucleus. In terms of biological role, regulatory protein, which plays a central role in chromosome stability. Probably acts by blocking the action of key proteins. During the mitosis, it blocks Separase/ESP1 function, preventing the proteolysis of the cohesin complex and the subsequent segregation of the chromosomes. At the onset of anaphase, it is ubiquitinated, conducting to its destruction and to the liberation of ESP1. The sequence is that of Securin (PDS1) from Saccharomyces cerevisiae (strain ATCC 204508 / S288c) (Baker's yeast).